A 23-amino-acid polypeptide reads, in one-letter code: Caerin-4.2 (23 aa).

As to expression, expressed by the skin parotoid and/or rostral glands.

The protein resides in the secreted. Functionally, antibacterial peptide, that adopts an alpha helical conformation which can disrupt bacterial membranes. Each caerin displays a different antimicrobial specificity. This Ranoidea caerulea (Green tree frog) protein is Caerin-4.2.